The chain runs to 186 residues: Pyridoxal 5'-phosphate synthase subunit PdxT (186 aa).

Position 47-49 (47-49 (GES)) interacts with L-glutamine. Cysteine 76 (nucleophile) is an active-site residue. L-glutamine is bound by residues arginine 102 and 130-131 (IR). Catalysis depends on charge relay system residues histidine 166 and glutamate 168.

It belongs to the glutaminase PdxT/SNO family. As to quaternary structure, in the presence of PdxS, forms a dodecamer of heterodimers. Only shows activity in the heterodimer.

It catalyses the reaction aldehydo-D-ribose 5-phosphate + D-glyceraldehyde 3-phosphate + L-glutamine = pyridoxal 5'-phosphate + L-glutamate + phosphate + 3 H2O + H(+). The enzyme catalyses L-glutamine + H2O = L-glutamate + NH4(+). It participates in cofactor biosynthesis; pyridoxal 5'-phosphate biosynthesis. Catalyzes the hydrolysis of glutamine to glutamate and ammonia as part of the biosynthesis of pyridoxal 5'-phosphate. The resulting ammonia molecule is channeled to the active site of PdxS. This Staphylococcus epidermidis (strain ATCC 35984 / DSM 28319 / BCRC 17069 / CCUG 31568 / BM 3577 / RP62A) protein is Pyridoxal 5'-phosphate synthase subunit PdxT.